The following is a 1462-amino-acid chain: Tyrosine-protein phosphatase 69D (1462 aa).

The first 28 residues, 1–28 (MALLYRRMSMLLNIILAYIFLCAICVQG), serve as a signal peptide directing secretion. Ig-like C2-type domains are found at residues 29 to 125 (SVKQ…TEFQ) and 131 to 230 (PSKV…KEIT). Residues 29-805 (SVKQEWAEIG…MDYYLSIGVK (777 aa)) are Extracellular-facing. N-linked (GlcNAc...) asparagine glycosylation is found at Asn-40, Asn-58, Asn-64, Asn-85, Asn-109, Asn-119, Asn-162, Asn-191, Asn-196, Asn-209, Asn-255, Asn-288, Asn-302, Asn-429, Asn-442, Asn-451, Asn-516, Asn-613, Asn-701, and Asn-755. Cys-45 and Cys-112 are disulfide-bonded. A disulfide bond links Cys-154 and Cys-214. Fibronectin type-III domains follow at residues 237-332 (PQVS…TLSY), 334-435 (PIFI…TMDG), and 439-547 (KPTN…TPDA). Residues 806 to 823 (AGAVLLGVILVFIVLWVF) form a helical membrane-spanning segment. Topologically, residues 824-1462 (HHKKTKNELQ…LHHIAESTLD (639 aa)) are cytoplasmic. Tyrosine-protein phosphatase domains follow at residues 893–1156 (FLRE…LLDT) and 1187–1450 (LEVE…IINY). Active-site phosphocysteine intermediate residues include Cys-1097 and Cys-1391.

This sequence belongs to the protein-tyrosine phosphatase family. Receptor class subfamily.

The protein resides in the membrane. It carries out the reaction O-phospho-L-tyrosyl-[protein] + H2O = L-tyrosyl-[protein] + phosphate. In terms of biological role, possible cell adhesion receptor. This chain is Tyrosine-protein phosphatase 69D (Ptp69D), found in Drosophila melanogaster (Fruit fly).